Consider the following 383-residue polypeptide: Probable mannan endo-1,4-beta-mannosidase A (383 aa).

The N-terminal stretch at 1–21 (MKLSNALLTLASLALANVSTA) is a signal peptide. N-linked (GlcNAc...) asparagine glycosylation is present at N17. Residue W92 coordinates substrate. Residue N194 is glycosylated (N-linked (GlcNAc...) asparagine). Residue N205 coordinates substrate. E206 acts as the Proton donor in catalysis. N-linked (GlcNAc...) asparagine glycosylation occurs at N263. Y281 contributes to the substrate binding site. The active-site Nucleophile is the E314. W344 contacts substrate.

The protein belongs to the glycosyl hydrolase 5 (cellulase A) family.

It is found in the secreted. It catalyses the reaction Random hydrolysis of (1-&gt;4)-beta-D-mannosidic linkages in mannans, galactomannans and glucomannans.. Functionally, endo-1,4-mannanase, a crucial enzyme for depolymerization of seed galactomannans and wood galactoglucomannans. The protein is Probable mannan endo-1,4-beta-mannosidase A (manA) of Aspergillus niger (strain ATCC MYA-4892 / CBS 513.88 / FGSC A1513).